Consider the following 189-residue polypeptide: Large ribosomal subunit protein bL9 (189 aa).

It belongs to the bacterial ribosomal protein bL9 family.

Binds to the 23S rRNA. The sequence is that of Large ribosomal subunit protein bL9 from Methylobacterium nodulans (strain LMG 21967 / CNCM I-2342 / ORS 2060).